Here is a 144-residue protein sequence, read N- to C-terminus: Ribosomal RNA large subunit methyltransferase H (144 aa).

S-adenosyl-L-methionine-binding positions include Leu-63, Gly-92, and 111–116; that span reads LSPLTF.

This sequence belongs to the RNA methyltransferase RlmH family. In terms of assembly, homodimer.

The protein resides in the cytoplasm. The catalysed reaction is pseudouridine(1915) in 23S rRNA + S-adenosyl-L-methionine = N(3)-methylpseudouridine(1915) in 23S rRNA + S-adenosyl-L-homocysteine + H(+). Its function is as follows. Specifically methylates the pseudouridine at position 1915 (m3Psi1915) in 23S rRNA. In Synechococcus sp. (strain CC9902), this protein is Ribosomal RNA large subunit methyltransferase H.